A 222-amino-acid polypeptide reads, in one-letter code: GTP cyclohydrolase 1 (222 aa).

3 residues coordinate Zn(2+): Cys111, His114, and Cys182.

Belongs to the GTP cyclohydrolase I family. Toroid-shaped homodecamer, composed of two pentamers of five dimers.

The enzyme catalyses GTP + H2O = 7,8-dihydroneopterin 3'-triphosphate + formate + H(+). The protein operates within cofactor biosynthesis; 7,8-dihydroneopterin triphosphate biosynthesis; 7,8-dihydroneopterin triphosphate from GTP: step 1/1. This chain is GTP cyclohydrolase 1, found in Klebsiella pneumoniae subsp. pneumoniae (strain ATCC 700721 / MGH 78578).